The primary structure comprises 266 residues: Putative pyruvate, phosphate dikinase regulatory protein (266 aa).

149-156 (GVSRTSKT) is a binding site for ADP.

The protein belongs to the pyruvate, phosphate/water dikinase regulatory protein family. PDRP subfamily.

It catalyses the reaction N(tele)-phospho-L-histidyl/L-threonyl-[pyruvate, phosphate dikinase] + ADP = N(tele)-phospho-L-histidyl/O-phospho-L-threonyl-[pyruvate, phosphate dikinase] + AMP + H(+). It carries out the reaction N(tele)-phospho-L-histidyl/O-phospho-L-threonyl-[pyruvate, phosphate dikinase] + phosphate + H(+) = N(tele)-phospho-L-histidyl/L-threonyl-[pyruvate, phosphate dikinase] + diphosphate. Functionally, bifunctional serine/threonine kinase and phosphorylase involved in the regulation of the pyruvate, phosphate dikinase (PPDK) by catalyzing its phosphorylation/dephosphorylation. In Geobacillus sp. (strain WCH70), this protein is Putative pyruvate, phosphate dikinase regulatory protein.